Here is a 76-residue protein sequence, read N- to C-terminus: UPF0154 protein Sca_0984 (76 aa).

Residues 4–24 (WLAILLIVAALIIGLVGGFFL) traverse the membrane as a helical segment.

It belongs to the UPF0154 family.

The protein localises to the cell membrane. In Staphylococcus carnosus (strain TM300), this protein is UPF0154 protein Sca_0984.